Reading from the N-terminus, the 257-residue chain is Nopaline permease ATP-binding protein P (257 aa).

Residues 8–253 (LVAEDVHKNF…PTSPRCRAFL (246 aa)) enclose the ABC transporter domain. Residue 40–47 (GSSGSGKS) participates in ATP binding.

It belongs to the ABC transporter superfamily.

The protein localises to the cell inner membrane. Its function is as follows. Component of the nopaline active transport system probably consisting of four subunits: Q, M, P and T. This system is also capable of transporting octopine provided that catabolic functions are induced with nopaline. The protein is Nopaline permease ATP-binding protein P (nocP) of Agrobacterium fabrum (strain C58 / ATCC 33970) (Agrobacterium tumefaciens (strain C58)).